The primary structure comprises 923 residues: Alanine--tRNA ligase (923 aa).

Residues His-611, His-615, Cys-714, and His-718 each contribute to the Zn(2+) site.

It belongs to the class-II aminoacyl-tRNA synthetase family. It depends on Zn(2+) as a cofactor.

It localises to the cytoplasm. The catalysed reaction is tRNA(Ala) + L-alanine + ATP = L-alanyl-tRNA(Ala) + AMP + diphosphate. Its function is as follows. Catalyzes the attachment of alanine to tRNA(Ala) in a two-step reaction: alanine is first activated by ATP to form Ala-AMP and then transferred to the acceptor end of tRNA(Ala). Also edits incorrectly charged Ser-tRNA(Ala) and Gly-tRNA(Ala) via its editing domain. The chain is Alanine--tRNA ligase from Methanosarcina barkeri (strain Fusaro / DSM 804).